The primary structure comprises 466 residues: Uronate isomerase (466 aa).

It belongs to the metallo-dependent hydrolases superfamily. Uronate isomerase family.

The catalysed reaction is D-glucuronate = D-fructuronate. It catalyses the reaction aldehydo-D-galacturonate = keto-D-tagaturonate. It participates in carbohydrate metabolism; pentose and glucuronate interconversion. This is Uronate isomerase from Streptococcus agalactiae serotype V (strain ATCC BAA-611 / 2603 V/R).